The chain runs to 428 residues: AA14 family lytic polysaccharide monooxygenase A (428 aa).

Positions 1–21 (MLRSLPASLALVAAFASKASA) are cleaved as a signal peptide. 2 N-linked (GlcNAc...) asparagine glycosylation sites follow: Asn34 and Asn52. Intrachain disulfides connect Cys88–Cys112, Cys131–Cys158, Cys174–Cys179, Cys181–Cys203, and Cys223–Cys239. Asn155 is a glycosylation site (N-linked (GlcNAc...) asparagine). Disordered regions lie at residues 216–239 (KPAV…PGNC) and 292–428 (SSGT…HNAH). Residues 223–232 (CGADPDHGKP) show a composition bias toward basic and acidic residues. The N-linked (GlcNAc...) asparagine glycan is linked to Asn238. The segment covering 292–379 (SSGTGSSPTS…SVATEASSSP (88 aa)) has biased composition (low complexity). Polar residues predominate over residues 380–402 (IASTTVDEAVVSSSTVGSINPTR). The segment covering 414 to 428 (QKKKRKHARHLHNAH) has biased composition (basic residues).

Requires Cu(2+) as cofactor.

It localises to the secreted. Functionally, lytic polysaccharide monooxygenase (LPMO) showing oxidase and peroxidase activities that are common for LPMOs. Catalysis by LPMOs requires the reduction of the active-site copper from Cu(II) to Cu(I) by a reducing agent and H(2)O(2) or O(2) as a cosubstrate. Shows no activity on cellulose-associated xylan or any other tested polysaccharide substrate, meaning that the substrate rremains unknown. In Trametes coccinea (strain BRFM310) (Pycnoporus coccineus), this protein is AA14 family lytic polysaccharide monooxygenase A.